A 293-amino-acid chain; its full sequence is tRNA pseudouridine synthase B (293 aa).

Residue Asp40 is the Nucleophile of the active site.

Belongs to the pseudouridine synthase TruB family. Type 1 subfamily.

It carries out the reaction uridine(55) in tRNA = pseudouridine(55) in tRNA. Its function is as follows. Responsible for synthesis of pseudouridine from uracil-55 in the psi GC loop of transfer RNAs. This is tRNA pseudouridine synthase B from Mycolicibacterium paratuberculosis (strain ATCC BAA-968 / K-10) (Mycobacterium paratuberculosis).